The primary structure comprises 568 residues: Small ribosomal subunit protein bS1 (568 aa).

S1 motif domains are found at residues 39–100 (KTVV…LSRE), 118–184 (GEFV…VSRR), 205–273 (GMIL…LGIK), 290–360 (GKKM…LSIK), 377–447 (GTII…LGIK), and 464–533 (GTIV…LSVK).

It belongs to the bacterial ribosomal protein bS1 family.

In terms of biological role, binds mRNA; thus facilitating recognition of the initiation point. It is needed to translate mRNA with a short Shine-Dalgarno (SD) purine-rich sequence. The protein is Small ribosomal subunit protein bS1 (rpsA) of Rickettsia typhi (strain ATCC VR-144 / Wilmington).